Consider the following 699-residue polypeptide: Lutropin-choriogonadotropic hormone receptor (699 aa).

Positions 1–26 (MKQRFSALQLLKLLLLLQPPLPRALR) are cleaved as a signal peptide. Residues 27–66 (EALCPEPCNCVPDGALRCPGPTAGLTRLSLAYLPVKVIPS) enclose the LRRNT domain. Over 27–363 (EALCPEPCNC…EDIMGYDFLR (337 aa)) the chain is Extracellular. LRR repeat units follow at residues 96–115 (NLLN…RYIE), 124–145 (RLKY…TKVF), and 149–171 (SNFI…AFQG). N-linked (GlcNAc...) asparagine glycosylation is present at asparagine 99. N-linked (GlcNAc...) asparagine glycosylation is found at asparagine 174 and asparagine 195. LRR repeat units lie at residues 175–196 (ESVT…AFNG), 198–220 (TLTS…AFRG), and 223–244 (GPKT…GLES). N-linked (GlcNAc...) asparagine glycosylation is found at asparagine 291, asparagine 299, and asparagine 313. Residue tyrosine 331 is modified to Sulfotyrosine. The helical transmembrane segment at 364–385 (VLIWLINILAIMGNMTVLFVLL) threads the bilayer. Over 386 to 395 (TSRYKLTVPR) the chain is Cytoplasmic. Residues 396–416 (FLMCNLSFADFCMGLYLLLIA) form a helical membrane-spanning segment. The Extracellular segment spans residues 417 to 439 (SVDSQTKGQYYNHAIDWQTGSGC). Cysteine 439 and cysteine 514 are joined by a disulfide. A helical membrane pass occupies residues 440–462 (STAGFFTVFASELSVYTLTVITL). The Cytoplasmic segment spans residues 463–482 (ERWHTITYAIHLDQKLRLRH). A helical transmembrane segment spans residues 483–505 (AILIMLGGWLFSSLIAMLPLVGV). Over 506 to 525 (SNYMKVSICFPMDVETTLSQ) the chain is Extracellular. A helical membrane pass occupies residues 526–549 (VYILTILILNVVAFFIICACYIKI). The Cytoplasmic portion of the chain corresponds to 550–570 (YFAVRNPELMATNKDTKIAKK). A helical membrane pass occupies residues 571–594 (MAILIFTDFTCMAPISFFAISAAF). Over 595–605 (KVPLITVTNSK) the chain is Extracellular. Residues 606–627 (VLLVLFYPINSCANPFLYAIFT) traverse the membrane as a helical segment. The Cytoplasmic portion of the chain corresponds to 628–699 (KTFQRDFFLL…LLDKTRYTEC (72 aa)). Residues cysteine 643 and cysteine 644 are each lipidated (S-palmitoyl cysteine).

This sequence belongs to the G-protein coupled receptor 1 family. FSH/LSH/TSH subfamily. Sulfated. As to expression, gonadal and thyroid cells.

The protein localises to the cell membrane. Receptor for lutropin-choriogonadotropic hormone. The activity of this receptor is mediated by G proteins which activate adenylate cyclase. The protein is Lutropin-choriogonadotropic hormone receptor (LHCGR) of Homo sapiens (Human).